A 1404-amino-acid chain; its full sequence is ABC transporter G family member 47 (1404 aa).

Residues 156–423 enclose the ABC transporter 1 domain; sequence GNALHITRKK…FQSIGFKCPE (268 aa). 189–196 lines the ATP pocket; that stretch reads GPPGSGKT. One can recognise an ABC transmembrane type-2 1 domain in the interval 501 to 714; the sequence is ELLQANIDRE…ALNTLAVNEF (214 aa). The next 7 helical transmembrane spans lie at 519–539, 565–585, 607–627, 638–658, 663–683, 692–712, and 751–771; these read FLYI…MTVF, MIMF…PVFF, TPIS…VIGF, FLAL…IASL, VVAS…SGFI, WWIW…LAVN, and VGAL…CLIF. Residues 808 to 1059 form the ABC transporter 2 domain; that stretch reads ITFEDIKYSI…ELIRYFEAIE (252 aa). 852-859 serves as a coordination point for ATP; it reads GVSGAGKT. The 215-residue stretch at 1132–1346 folds into the ABC transmembrane type-2 2 domain; sequence TQCLACLWKQ…TLNGLVTSQF (215 aa). Transmembrane regions (helical) follow at residues 1152-1172, 1183-1199, 1239-1259, 1266-1286, 1298-1318, 1321-1341, and 1373-1393; these read IAVK…MFWG, LFSA…TMGV, LPYI…MIGY, FFWY…YGMM, TVVS…LIPL, IPIW…LNGL, and LLWV…FLFG.

The protein belongs to the ABC transporter superfamily. ABCG family. PDR (TC 3.A.1.205) subfamily.

Its subcellular location is the membrane. May be a general defense protein. The chain is ABC transporter G family member 47 from Oryza sativa subsp. japonica (Rice).